Reading from the N-terminus, the 191-residue chain is Recombination protein RecR (191 aa).

A C4-type zinc finger spans residues 51–66 (CQTCFHLSADPECEIC). The region spanning 74 to 168 (GVICVVADSR…SVSRIAYGLP (95 aa)) is the Toprim domain.

Belongs to the RecR family.

May play a role in DNA repair. It seems to be involved in an RecBC-independent recombinational process of DNA repair. It may act with RecF and RecO. This Synechococcus sp. (strain CC9605) protein is Recombination protein RecR.